The chain runs to 386 residues: Patatin group M-2 (386 aa).

The signal sequence occupies residues 1 to 23 (MATTKSFLILFFMILATTSSTCA). Residues 32–229 (LSIDGGGIKG…TVGDPALLSL (198 aa)) enclose the PNPLA domain. Residues 36-41 (GGGIKG) carry the GXGXXG motif. The short motif at 75 to 79 (GTSTG) is the GXSXG element. S77 functions as the Nucleophile in the catalytic mechanism. Residue N115 is glycosylated (N-linked (GlcNAc...) asparagine). D215 acts as the Proton acceptor in catalysis. A DGA/G motif is present at residues 215-217 (DGG). A coiled-coil region spans residues 321 to 384 (ENALTGTTTE…DRKKLRANKA (64 aa)).

The protein belongs to the patatin family. Tuber.

Its subcellular location is the vacuole. In terms of biological role, probable lipolytic acyl hydrolase (LAH), an activity which is thought to be involved in the response of tubers to pathogens. This Solanum tuberosum (Potato) protein is Patatin group M-2.